The following is a 194-amino-acid chain: MYKKIISSELDAALKILKNFLKNEEQIENIEKAAILIAKSFKNKNKVISCGNGGSHCDAVHFSEELTGLYREKRPGYAAIPISDVGHISAIGNDFGYDQIFSRYIESIGLPNDVLLAISTSGNSINIINAIQTAHRKKMKVIVLTGNDGGQVKHLSDVEICIPYHGYSDRIQEMHIKIIHILILIIEKEMKKIN.

In terms of domain architecture, SIS spans 37–194 (IAKSFKNKNK…IIEKEMKKIN (158 aa)). 52 to 54 (NGG) serves as a coordination point for substrate. The Zn(2+) site is built by H61 and E65. Substrate-binding positions include E65, 93–94 (ND), 119–121 (STS), S124, and Q172. Zn(2+) contacts are provided by Q172 and H180.

This sequence belongs to the SIS family. GmhA subfamily. In terms of assembly, homotetramer. Zn(2+) serves as cofactor.

It localises to the cytoplasm. It carries out the reaction 2 D-sedoheptulose 7-phosphate = D-glycero-alpha-D-manno-heptose 7-phosphate + D-glycero-beta-D-manno-heptose 7-phosphate. The protein operates within carbohydrate biosynthesis; D-glycero-D-manno-heptose 7-phosphate biosynthesis; D-glycero-alpha-D-manno-heptose 7-phosphate and D-glycero-beta-D-manno-heptose 7-phosphate from sedoheptulose 7-phosphate: step 1/1. Functionally, catalyzes the isomerization of sedoheptulose 7-phosphate in D-glycero-D-manno-heptose 7-phosphate. The protein is Phosphoheptose isomerase of Buchnera aphidicola subsp. Schizaphis graminum (strain Sg).